The chain runs to 322 residues: UDP-N-acetylenolpyruvoylglucosamine reductase (322 aa).

The FAD-binding PCMH-type domain maps to 36-202 (RAGGPAQVLF…TSVLFEGVPG (167 aa)). Arginine 182 is an active-site residue. Serine 231 acts as the Proton donor in catalysis. Glutamate 301 is a catalytic residue.

The protein belongs to the MurB family. Requires FAD as cofactor.

The protein resides in the cytoplasm. The catalysed reaction is UDP-N-acetyl-alpha-D-muramate + NADP(+) = UDP-N-acetyl-3-O-(1-carboxyvinyl)-alpha-D-glucosamine + NADPH + H(+). It participates in cell wall biogenesis; peptidoglycan biosynthesis. Functionally, cell wall formation. The chain is UDP-N-acetylenolpyruvoylglucosamine reductase from Brucella suis biovar 1 (strain 1330).